We begin with the raw amino-acid sequence, 237 residues long: Ribonuclease PH (237 aa).

Phosphate-binding positions include Arg86 and 124 to 126; that span reads GTR.

The protein belongs to the RNase PH family. In terms of assembly, homohexameric ring arranged as a trimer of dimers.

The catalysed reaction is tRNA(n+1) + phosphate = tRNA(n) + a ribonucleoside 5'-diphosphate. Its function is as follows. Phosphorolytic 3'-5' exoribonuclease that plays an important role in tRNA 3'-end maturation. Removes nucleotide residues following the 3'-CCA terminus of tRNAs; can also add nucleotides to the ends of RNA molecules by using nucleoside diphosphates as substrates, but this may not be physiologically important. Probably plays a role in initiation of 16S rRNA degradation (leading to ribosome degradation) during starvation. In Shewanella sediminis (strain HAW-EB3), this protein is Ribonuclease PH.